We begin with the raw amino-acid sequence, 202 residues long: Dephospho-CoA kinase (202 aa).

In terms of domain architecture, DPCK spans 4 to 202; sequence FLGLTGGIAT…EGVCHKSGMS (199 aa). 12-17 lines the ATP pocket; that stretch reads ATGKTT.

Belongs to the CoaE family.

The protein resides in the cytoplasm. The enzyme catalyses 3'-dephospho-CoA + ATP = ADP + CoA + H(+). The protein operates within cofactor biosynthesis; coenzyme A biosynthesis; CoA from (R)-pantothenate: step 5/5. In terms of biological role, catalyzes the phosphorylation of the 3'-hydroxyl group of dephosphocoenzyme A to form coenzyme A. This is Dephospho-CoA kinase from Latilactobacillus sakei subsp. sakei (strain 23K) (Lactobacillus sakei subsp. sakei).